The primary structure comprises 184 residues: Large ribosomal subunit protein uL22 (184 aa).

Belongs to the universal ribosomal protein uL22 family. As to quaternary structure, part of the 50S ribosomal subunit.

Functionally, this protein binds specifically to 23S rRNA. It makes multiple contacts with different domains of the 23S rRNA in the assembled 50S subunit and ribosome. The globular domain of the protein is located near the polypeptide exit tunnel on the outside of the subunit, while an extended beta-hairpin is found that lines the wall of the exit tunnel in the center of the 70S ribosome. This Pyrobaculum calidifontis (strain DSM 21063 / JCM 11548 / VA1) protein is Large ribosomal subunit protein uL22.